A 472-amino-acid polypeptide reads, in one-letter code: Meiotic spindle formation protein mei-1 (472 aa).

The disordered stretch occupies residues 83–161; the sequence is HEAMTRQSGS…TQGILPQNSA (79 aa). Ser-92 bears the Phosphoserine; by mbk-2 mark. Composition is skewed to polar residues over residues 134-143 and 150-161; these read KSTSSMSTNP and NPTQGILPQNSA. ATP-binding positions include 233–240 and 351–352; these read GPPGTGKT and RR.

The protein belongs to the AAA ATPase family. Katanin p60 subunit A1 subfamily. In terms of assembly, homohexamer; ATP hydrolysis initiates a cycle between an open spiral and a closed ring conformation which is probably involved in pulling tubulin dimers out from microtubules. Interacts with mei-2, which may serve as a targeting subunit. Interacts with mel-26, which targets mei-1 for ubiquitin mediated proteolysis. Interacts with phosphatase pph-4.1. In terms of processing, phosphorylated. Phosphorylation by mbk-2 is required for its rapid degradation following meiosis II. Likely dephosphorylated by the PP4 complex composed of catalytic subunit pph-4.1 and regulatory subunit ppfr-1. Polyubiquitination targets the protein for rapid degradation via the ubiquitin system at the end of meiosis. The BTB domain protein mel-26 may serve to specifically target mei-1 for ubiquitination by cul-3 containing complexes. The cul-3 protein is in turn regulated by neddylation by ned-8.

Its subcellular location is the cytoplasm. The protein localises to the cytoskeleton. It is found in the spindle pole. It localises to the chromosome. The enzyme catalyses n ATP + n H2O + a microtubule = n ADP + n phosphate + (n+1) alpha/beta tubulin heterodimers.. ATPase activity is stimulated by microtubules, which promote homooligomerization. ATP-dependent microtubule severing is stimulated by interaction with mei-2. Catalytic subunit of a complex which severs microtubules in an ATP-dependent manner. Microtubule severing may promote rapid reorganization of cellular microtubule arrays. Required specifically for meiotic spindle formation in the female germline; the presence of this protein is inimical to the formation of mitotic spindles. In body wall muscles, regulates organization of myosin thick filaments. The protein is Meiotic spindle formation protein mei-1 of Caenorhabditis elegans.